A 456-amino-acid chain; its full sequence is Bifunctional protein GlmU (456 aa).

Residues 1–229 are pyrophosphorylase; sequence MLNNAMSVVI…LSEVEGVNNR (229 aa). UDP-N-acetyl-alpha-D-glucosamine-binding positions include 11–14, Lys25, Gln76, 81–82, 103–105, Gly140, Glu154, Asn169, and Asn227; these read LAAG, GT, and YGD. Position 105 (Asp105) interacts with Mg(2+). Mg(2+) is bound at residue Asn227. The segment at 230–250 is linker; that stretch reads LQLSRLERVYQSEQAEKLLLA. The N-acetyltransferase stretch occupies residues 251–456; it reads GVMLRDPARF…EGWRRPVKKK (206 aa). UDP-N-acetyl-alpha-D-glucosamine-binding residues include Arg333 and Lys351. Residue His363 is the Proton acceptor of the active site. The UDP-N-acetyl-alpha-D-glucosamine site is built by Tyr366 and Asn377. Acetyl-CoA contacts are provided by residues Ala380, 386 to 387, Ser405, Ala423, and Arg440; that span reads NY.

The protein in the N-terminal section; belongs to the N-acetylglucosamine-1-phosphate uridyltransferase family. It in the C-terminal section; belongs to the transferase hexapeptide repeat family. Homotrimer. It depends on Mg(2+) as a cofactor.

The protein resides in the cytoplasm. The catalysed reaction is alpha-D-glucosamine 1-phosphate + acetyl-CoA = N-acetyl-alpha-D-glucosamine 1-phosphate + CoA + H(+). The enzyme catalyses N-acetyl-alpha-D-glucosamine 1-phosphate + UTP + H(+) = UDP-N-acetyl-alpha-D-glucosamine + diphosphate. It participates in nucleotide-sugar biosynthesis; UDP-N-acetyl-alpha-D-glucosamine biosynthesis; N-acetyl-alpha-D-glucosamine 1-phosphate from alpha-D-glucosamine 6-phosphate (route II): step 2/2. The protein operates within nucleotide-sugar biosynthesis; UDP-N-acetyl-alpha-D-glucosamine biosynthesis; UDP-N-acetyl-alpha-D-glucosamine from N-acetyl-alpha-D-glucosamine 1-phosphate: step 1/1. It functions in the pathway bacterial outer membrane biogenesis; LPS lipid A biosynthesis. Catalyzes the last two sequential reactions in the de novo biosynthetic pathway for UDP-N-acetylglucosamine (UDP-GlcNAc). The C-terminal domain catalyzes the transfer of acetyl group from acetyl coenzyme A to glucosamine-1-phosphate (GlcN-1-P) to produce N-acetylglucosamine-1-phosphate (GlcNAc-1-P), which is converted into UDP-GlcNAc by the transfer of uridine 5-monophosphate (from uridine 5-triphosphate), a reaction catalyzed by the N-terminal domain. This Escherichia fergusonii (strain ATCC 35469 / DSM 13698 / CCUG 18766 / IAM 14443 / JCM 21226 / LMG 7866 / NBRC 102419 / NCTC 12128 / CDC 0568-73) protein is Bifunctional protein GlmU.